The sequence spans 248 residues: 1-(5-phosphoribosyl)-5-[(5-phosphoribosylamino)methylideneamino] imidazole-4-carboxamide isomerase (248 aa).

The Proton acceptor role is filled by aspartate 7. Aspartate 129 serves as the catalytic Proton donor.

It belongs to the HisA/HisF family.

The protein resides in the cytoplasm. The catalysed reaction is 1-(5-phospho-beta-D-ribosyl)-5-[(5-phospho-beta-D-ribosylamino)methylideneamino]imidazole-4-carboxamide = 5-[(5-phospho-1-deoxy-D-ribulos-1-ylimino)methylamino]-1-(5-phospho-beta-D-ribosyl)imidazole-4-carboxamide. It functions in the pathway amino-acid biosynthesis; L-histidine biosynthesis; L-histidine from 5-phospho-alpha-D-ribose 1-diphosphate: step 4/9. This is 1-(5-phosphoribosyl)-5-[(5-phosphoribosylamino)methylideneamino] imidazole-4-carboxamide isomerase from Aeromonas salmonicida (strain A449).